The primary structure comprises 485 residues: MENGFSLVPKEEEEEEDYSNEKSEDQTSYYLSTEMMKKVSFMAAPMVAVAASQYLLQVISIVMAGHLDELSLSAVAIATSLTNVTGFSLIFGLAGALETLCGQAFGAGQFRNISAYTYGSMLCLLLVCFPISLLWVFMDKLLELFHQDPLISQLACRYSIWLIPALFGYSVLQSMTRFFQSQGLVLPLFLSSLGALFFHVPFSWLLVYKLRFGIVGAALSIGFSYWLNVGLLWAFMRDSALYRKNWNLRAQEIFLSMKQFITLAIPTAMMTCLEWWSFELLILMSGLLPNSKLETSVLSICLTMSSLHYVIVNAIGAAASTHVSNKLGAGNPKAARSAANSAIFLGMIDAAIVSISLYSYRRNWAYIFSNESEVADYVTQITPFLCLSIGVDSFLAVLSGVARGTGWQHIGAYANIGSYYLVGIPVGSILCFVVKLRGKGLWIGILVGSTLQTIVLALVTFFTNWEQEVAKARDRVIEMIPQEII.

The tract at residues 1–26 (MENGFSLVPKEEEEEEDYSNEKSEDQ) is disordered. Helical transmembrane passes span 41-61 (FMAA…VISI), 74-94 (AVAI…FGLA), 118-138 (YGSM…WVFM), 159-179 (SIWL…TRFF), 188-208 (LFLS…LLVY), 212-232 (FGIV…VGLL), 263-283 (LAIP…LLIL), 297-317 (VLSI…AIGA), 338-358 (AANS…ISLY), 381-401 (ITPF…LSGV), 414-434 (ANIG…CFVV), and 442-462 (WIGI…VTFF).

Belongs to the multi antimicrobial extrusion (MATE) (TC 2.A.66.1) family.

The protein resides in the membrane. This Arabidopsis thaliana (Mouse-ear cress) protein is Protein DETOXIFICATION 8.